Consider the following 288-residue polypeptide: Probable sulfate transport system permease protein cysT (288 aa).

The next 8 helical transmembrane spans lie at 2 to 22, 28 to 48, 77 to 97, 112 to 132, 149 to 169, 196 to 218, 227 to 247, and 257 to 277; these read IPLF…KFRF, LVLA…IFFL, FLTA…LAWV, TVDL…MTVF, IVFN…PFVV, TTFW…TLGF, SIVL…VLLF, and SATI…FFIN. An ABC transmembrane type-1 domain is found at 73–277; the sequence is YGFTFLTALL…ISFTALFFIN (205 aa).

It belongs to the binding-protein-dependent transport system permease family. CysTW subfamily.

The protein resides in the plastid. It localises to the chloroplast membrane. Functionally, part of the ABC transporter complex cysAWTP (TC 3.A.1.6.1) involved in sulfate/thiosulfate import. Probably responsible for the translocation of the substrate across the membrane. In Marchantia polymorpha (Common liverwort), this protein is Probable sulfate transport system permease protein cysT (cysT).